A 476-amino-acid chain; its full sequence is tRNA(Ile)-lysidine synthase (476 aa).

26-31 serves as a coordination point for ATP; that stretch reads SGGSDS.

This sequence belongs to the tRNA(Ile)-lysidine synthase family.

Its subcellular location is the cytoplasm. It carries out the reaction cytidine(34) in tRNA(Ile2) + L-lysine + ATP = lysidine(34) in tRNA(Ile2) + AMP + diphosphate + H(+). Its function is as follows. Ligates lysine onto the cytidine present at position 34 of the AUA codon-specific tRNA(Ile) that contains the anticodon CAU, in an ATP-dependent manner. Cytidine is converted to lysidine, thus changing the amino acid specificity of the tRNA from methionine to isoleucine. This is tRNA(Ile)-lysidine synthase from Bartonella quintana (strain Toulouse) (Rochalimaea quintana).